The sequence spans 277 residues: Secoisolariciresinol dehydrogenase (277 aa).

NAD(+)-binding positions include 24–29 (GGASGI), aspartate 48, valine 73, and asparagine 99. Substrate is bound at residue serine 163. The active-site Proton donor/acceptor is the tyrosine 166. Lysine 170 lines the NAD(+) pocket.

The protein belongs to the short-chain dehydrogenases/reductases (SDR) family. Homotetramer.

The catalysed reaction is (-)-secoisolariciresinol + 2 NAD(+) = (-)-matairesinol + 2 NADH + 2 H(+). Its function is as follows. Oxidoreductase involved in lignan biosynthesis. Catalyzes the stereospecific conversion of (-)-secoisolariciresinol to (-)-matairesinol via a lactol intermediate. The sequence is that of Secoisolariciresinol dehydrogenase from Forsythia intermedia (Border forsythia).